The primary structure comprises 623 residues: MYAQHLRKWSLKTKKQLMPLILLIISYMLLLNTCVLSSSATTQQQQQQQQQQQHLPRLWEGSAEESSYYIPLSSDNGSGSSESSAESGSSSSRSSSNNIDNNILSRLLSLNSNSLSSRSNVKLKPATVFDAGSSTPAQQEQHVAAVPEQQQQQQQQQQSMQKVPNTLINSQIYNLLYNGMPSEAASSKMRRHIQPSQLPHQPESRAQLPSNYSSRPAVRSYLIESYEMPESMLEDRSPEQAARSRRDGSNTNGSRQQQRTGHRQQLQQDKRDHRRQRQDQQKEQRQQQQQRQHKSGNKHQQQQQQRRKHQRKHQRYNRYCSARDPAQLAFAAPTVFQGVFKSMSADRRVNFSATMKVEKVYKQQHDLQLPTLVRLQFALSNSSGECDIYRERLMPRGMLRSGNDLQQASDISYMMFVQQTNPGNFTILGQPMRVTHLVVEAVETAVSENYTQNAEVTKIFSKPSKAIIKHGKKLRIVCEVSGQPPPKVTWFKDEKSINRKRNIYQFKHHKRRSELIVRSFNSSSDAGRYECRAKNKASKAIAKRRIMIKASPVHFPTDRSASGIPCNFDYCFHNGTCRMIPDINEVYCRCPTEYFGNRCENKWPDSRYFVAIYGQIHTLNNDY.

The N-terminal stretch at 1 to 40 is a signal peptide; that stretch reads MYAQHLRKWSLKTKKQLMPLILLIISYMLLLNTCVLSSSA. Disordered regions lie at residues 70–98, 130–162, 184–214, and 229–317; these read IPLS…SSNN, DAGS…SMQK, AASS…NYSS, and PESM…QRYN. Composition is skewed to low complexity over residues 72–98 and 136–158; these read LSSD…SSNN and PAQQ…QQQQ. The N-linked (GlcNAc...) asparagine glycan is linked to N76. The N-linked (GlcNAc...) asparagine glycan is linked to N211. Positions 233 to 248 are enriched in basic and acidic residues; that stretch reads LEDRSPEQAARSRRDG. N-linked (GlcNAc...) asparagine glycosylation occurs at N252. Low complexity predominate over residues 255 to 267; it reads RQQQRTGHRQQLQ. The segment covering 305-316 has biased composition (basic residues); the sequence is QRRKHQRKHQRY. Residues N350, N381, N424, N449, N521, and N574 are each glycosylated (N-linked (GlcNAc...) asparagine). One can recognise an Ig-like C2-type domain in the interval 457–542; it reads TKIFSKPSKA…AKNKASKAIA (86 aa). 4 disulfides stabilise this stretch: C478/C531, C566/C577, C571/C588, and C590/C599. Positions 561–599 constitute an EGF-like domain; sequence ASGIPCNFDYCFHNGTCRMIPDINEVYCRCPTEYFGNRC.

Its subcellular location is the secreted. Ligand for the EGF receptor. Seems to play a role in the global proliferation of wing disc cells and the larval patterning. Shows a strong synergistic genetic interaction with spi, suggesting a molecular interdependence. Required for the development of interveins cells. The polypeptide is Protein vein (vn) (Drosophila melanogaster (Fruit fly)).